A 782-amino-acid polypeptide reads, in one-letter code: Acetazolamide conferring resistance protein zam (782 aa).

The 310-residue stretch at 270–579 (EVALSLESQA…QRLLKLVLTE (310 aa)) folds into the RNB domain. The S1 motif domain occupies 655 to 736 (GEIFRGLITG…YRQQIDLGAV (82 aa)). The segment at 737–782 (NNAPKDSANMDFDDDDEDGDEREEQDTMDWDAMEDGDDDEGGAVIF) is disordered. Over residues 747-782 (DFDDDDEDGDEREEQDTMDWDAMEDGDDDEGGAVIF) the composition is skewed to acidic residues.

Belongs to the RNR ribonuclease family.

Its function is as follows. Not known; control resistance to the carbonic anhydrase inhibitor acetazolamide. The protein is Acetazolamide conferring resistance protein zam (zam) of Synechocystis sp. (strain ATCC 27184 / PCC 6803 / Kazusa).